The chain runs to 358 residues: HLA class I histocompatibility antigen, alpha chain E (358 aa).

The signal sequence occupies residues 1-21 (MVDGTLLLLLSEALALTQTWA). Residues 22-111 (GSHSLKYFHT…LRGYYNQSEA (90 aa)) form an alpha-1 region. The Extracellular segment spans residues 22-305 (GSHSLKYFHT…KPASQPTIPI (284 aa)). Residues Tyr28, Glu84, Ser87, Asn98, and Tyr105 each contribute to the a peptide antigen site. Asn107 is a glycosylation site (N-linked (GlcNAc...) asparagine). The alpha-2 stretch occupies residues 112–203 (GSHTLQWMHG…EKGKETLLHL (92 aa)). A disulfide bond links Cys122 and Cys185. The a peptide antigen site is built by Ser164, Lys167, Gln177, Tyr180, and Tyr192. The tract at residues 204-295 (EPPKTHVTHH…GLPEPVTLRW (92 aa)) is alpha-3. Residues 206–294 (PKTHVTHHPI…EGLPEPVTLR (89 aa)) form the Ig-like C1-type domain. Cys224 and Cys280 are joined by a disulfide. The tract at residues 296–305 (KPASQPTIPI) is connecting peptide. Residues 306–329 (VGIIAGLVLLGSVVSGAVVAAVIW) form a helical membrane-spanning segment. Residues 330–358 (RKKSSGGKGGSYSKAEWSDSAQGSESHSL) are Cytoplasmic-facing. A disordered region spans residues 333–358 (SSGGKGGSYSKAEWSDSAQGSESHSL). A compositionally biased stretch (polar residues) spans 348 to 358 (DSAQGSESHSL). At Ser353 the chain carries Phosphoserine.

Belongs to the MHC class I family. Forms a heterotrimer with B2M and a self- or a pathogen-derived peptide (peptide-bound HLA-E-B2M). Similarly to MHC class Ia assembly, HLA-E-B2M heterodimer interacts with components of the antigen processing machinery TAPBP and TAP1-TAP2 complex; this interaction is required for peptide loading and translocation to the cell surface. Interacts with CALCR; this interaction is required for appropriate folding. The optimum binding peptide is a nonamer (VL9) that is primarily derived from amino-acid residues 3-11 of the signal sequences of most HLA-A, -B, -C and -G molecules. The VL9 peptide anchors to five main sites in the peptide-binding groove of HLA-E. Peptide-bound HLA-E-B2M complex interacts with KLRD1-KLRC1 receptor on NK cells. Binds with lower affinity to activating KLRD1-KLRC2. The common subunit KLRC1 plays a prominent role in directly interacting with HLA-E. Peptide-bound HLA-E-B2M interacts with the alpha-beta TCR on unconventional CD8+ T cells. Peptide-free HLA-E interacts with HLA-F-B2M complex; this interaction may regulate the intracellular trafficking and the stability of peptide-free MHC class I open conformers (OCs). Post-translationally, N-glycosylated. In terms of processing, the soluble form (sHLA-E) can be partly produced by proteolytic cleavage at the cell surface (shedding) by a matrix metalloproteinase. Alternative splicing is also suggested as a mechanism for generation of sHLA-E, although it remains to be proved. Expressed in secretory endometrial cells during pregnancy (at protein level). The expression in nonlymphoid tissues is restricted to endothelial cells from all types of vessels, including arteries, veins, capillaries, and lymphatics (at protein level). In lymphoid organs, it is mainly expressed in endothelial venules, B and T cells, monocytes, macrophages, NK cells and megakaryocytes (at protein level).

Its subcellular location is the cell membrane. The protein resides in the golgi apparatus membrane. It is found in the secreted. In terms of biological role, non-classical major histocompatibility class Ib molecule involved in immune self-nonself discrimination. In complex with B2M/beta-2-microglobulin binds nonamer self-peptides derived from the signal sequence of classical MHC class Ia molecules (VL9 peptides - VMAPRT[V/L][L/V/I/F]L). Peptide-bound HLA-E-B2M heterotrimeric complex primarily functions as a ligand for natural killer (NK) cell inhibitory receptor KLRD1-KLRC1, enabling NK cells to monitor the expression of other MHC class I molecules in healthy cells and to tolerate self. Upon cellular stress, preferentially binds signal sequence-derived peptides from stress-induced chaperones and is no longer recognized by NK cell inhibitory receptor KLRD1-KLRC1, resulting in impaired protection from NK cells. Binds signal sequence-derived peptides from non-classical MHC class Ib HLA-G molecules and acts as a ligand for NK cell activating receptor KLRD1-KLRC2, likely playing a role in the generation and effector functions of adaptive NK cells and in maternal-fetal tolerance during pregnancy. Besides self-peptides, can also bind and present pathogen-derived peptides conformationally similar to VL9 peptides to alpha-beta T cell receptor (TCR) on unconventional CD8-positive cytotoxic T cells, ultimately triggering antimicrobial immune response. Presents HIV gag peptides (immunodominant KAFSPEVIPMF and subdominant KALGPAATL epitopes) predominantly to CD8-positive T cell clones expressing a TRAV17-containing TCR, triggering HLA-E-restricted T cell responses. Presents mycobacterial peptides to HLA-E-restricted CD8-positive T cells eliciting both cytotoxic and immunoregulatory functions. Functionally, (Microbial infection) Viruses like human cytomegalovirus have evolved an escape mechanism whereby virus-induced down-regulation of host MHC class I molecules is coupled to the binding of viral peptides to HLA-E, restoring HLA-E expression and inducing HLA-E-dependent NK cell immune tolerance to infected cells. (Microbial infection) May bind HIV-1 gag/Capsid protein p24-derived peptide (AISPRTLNA) on infected cells and may inhibit NK cell cytotoxicity, a mechanism that allows HIV-1 to escape immune recognition. Its function is as follows. (Microbial infection) Upon SARS-CoV-2 infection, may contribute to functional exhaustion of cytotoxic NK cells and CD8-positive T cells. Binds SARS-CoV-2 S/Spike protein S1-derived peptide (LQPRTFLL) expressed on the surface of lung epithelial cells, inducing NK cell exhaustion and dampening of antiviral immune surveillance. The chain is HLA class I histocompatibility antigen, alpha chain E from Homo sapiens (Human).